Here is a 65-residue protein sequence, read N- to C-terminus: Large ribosomal subunit protein uL29 (65 aa).

It belongs to the universal ribosomal protein uL29 family.

The chain is Large ribosomal subunit protein uL29 from Lactobacillus acidophilus (strain ATCC 700396 / NCK56 / N2 / NCFM).